Here is a 322-residue protein sequence, read N- to C-terminus: Sideroflexin-1 (322 aa).

N-acetylserine is present on Ser2. Over 2 to 102 (SGELPPNINI…MSAQVPMNMT (101 aa)) the chain is Mitochondrial matrix. Residues 103–120 (ITGCMMTFYRTTPAVLFW) traverse the membrane as a helical segment. The Mitochondrial intermembrane portion of the chain corresponds to 121 to 146 (QWVNQSFNAVVNYTNRSGDAPLTVNE). The helical transmembrane segment at 147–167 (LGTAYVSATTGAVATALGLNA) threads the bilayer. At 168 to 174 (LTKRVSP) the chain is on the mitochondrial matrix side. A helical transmembrane segment spans residues 175-195 (LVGRFVPFAAVAAANCINIPL). The Mitochondrial intermembrane portion of the chain corresponds to 196 to 228 (MRQRELKVGIPVTDENGNRLGESASAAKQAITQ). Residues 229–249 (VVVSRILMAAPGMAIPPFIMN) traverse the membrane as a helical segment. At 250-266 (TLEKKAFLKRFPWMSAP) the chain is on the mitochondrial matrix side. The helical transmembrane segment at 267 to 287 (VQVGIVGFCLVFATPLCCALF) threads the bilayer. Residues 288 to 322 (PQKSSMSVTSLEAELQARIRETYPELRRVYFNKGL) lie on the Mitochondrial intermembrane side of the membrane.

Belongs to the sideroflexin family.

Its subcellular location is the mitochondrion inner membrane. It carries out the reaction L-serine(in) = L-serine(out). The catalysed reaction is L-alanine(in) = L-alanine(out). The enzyme catalyses L-cysteine(in) = L-cysteine(out). In terms of biological role, amino acid transporter importing serine, an essential substrate of the mitochondrial branch of the one-carbon pathway, into mitochondria. Mitochondrial serine is then converted to glycine and formate, which exits to the cytosol where it is used to generate the charged folates that serve as one-carbon donors. May also transport other amino acids including alanine and cysteine. This chain is Sideroflexin-1 (SFXN1), found in Ovis aries (Sheep).